A 329-amino-acid polypeptide reads, in one-letter code: Ribonucleoside-diphosphate reductase subunit beta (329 aa).

Positions 66, 97, and 101 each coordinate Fe cation. Tyr105 is a catalytic residue. Fe cation-binding residues include Glu164, Glu198, and His201.

The protein belongs to the ribonucleoside diphosphate reductase small chain family. As to quaternary structure, tetramer of two alpha and two beta subunits. The cofactor is Fe cation.

It carries out the reaction a 2'-deoxyribonucleoside 5'-diphosphate + [thioredoxin]-disulfide + H2O = a ribonucleoside 5'-diphosphate + [thioredoxin]-dithiol. In terms of biological role, provides the precursors necessary for DNA synthesis. Catalyzes the biosynthesis of deoxyribonucleotides from the corresponding ribonucleotides. The chain is Ribonucleoside-diphosphate reductase subunit beta (nrdF) from Bacillus subtilis (strain 168).